The following is a 131-amino-acid chain: Inner membrane protein YecN (131 aa).

Residues 1–107 (MVSALYAVLS…RWRRSGMSAT (107 aa)) are Cytoplasmic-facing. Residues 108-128 (WCALLLMVLANLWYMPWELVF) traverse the membrane as a helical segment. Topologically, residues 129–131 (SLR) are periplasmic.

It is found in the cell inner membrane. The sequence is that of Inner membrane protein YecN (yecN) from Escherichia coli O6:H1 (strain CFT073 / ATCC 700928 / UPEC).